A 328-amino-acid polypeptide reads, in one-letter code: DNA-directed RNA polymerase subunit alpha (328 aa).

The tract at residues 1-232 is alpha N-terminal domain (alpha-NTD); sequence MSTQGFLKPR…DQISVFAALE (232 aa). Residues 248-328 form an alpha C-terminal domain (alpha-CTD) region; it reads IDPVLLRPVD…NWPPLGLERP (81 aa).

The protein belongs to the RNA polymerase alpha chain family. In terms of assembly, homodimer. The RNAP catalytic core consists of 2 alpha, 1 beta, 1 beta' and 1 omega subunit. When a sigma factor is associated with the core the holoenzyme is formed, which can initiate transcription.

The catalysed reaction is RNA(n) + a ribonucleoside 5'-triphosphate = RNA(n+1) + diphosphate. DNA-dependent RNA polymerase catalyzes the transcription of DNA into RNA using the four ribonucleoside triphosphates as substrates. The polypeptide is DNA-directed RNA polymerase subunit alpha (Bordetella bronchiseptica (strain ATCC BAA-588 / NCTC 13252 / RB50) (Alcaligenes bronchisepticus)).